Consider the following 218-residue polypeptide: Cytochrome b6 (218 aa).

Residues 35–55 (IFYCLGGITLVCFLIQFATGF) form a helical membrane-spanning segment. Residue Cys38 coordinates heme c. Heme b contacts are provided by His89 and His103. Transmembrane regions (helical) follow at residues 93 to 113 (ASMMVLMLILHVFRVYLTGGF), 119 to 139 (LTWVTGVVMAVITVAFGVTGY), and 189 to 209 (LHTFVLPWSLAVFMLMHFLMI). The heme b site is built by His190 and His205.

This sequence belongs to the cytochrome b family. PetB subfamily. The 4 large subunits of the cytochrome b6-f complex are cytochrome b6, subunit IV (17 kDa polypeptide, PetD), cytochrome f and the Rieske protein, while the 4 small subunits are PetG, PetL, PetM and PetN. The complex functions as a dimer. It depends on heme b as a cofactor. Heme c serves as cofactor.

It localises to the cellular thylakoid membrane. Its function is as follows. Component of the cytochrome b6-f complex, which mediates electron transfer between photosystem II (PSII) and photosystem I (PSI), cyclic electron flow around PSI, and state transitions. The protein is Cytochrome b6 of Prochlorococcus marinus (strain MIT 9301).